We begin with the raw amino-acid sequence, 191 residues long: GTP-dependent dephospho-CoA kinase (191 aa).

D46, D65, K67, and E122 together coordinate GTP.

The protein belongs to the GTP-dependent DPCK family.

The catalysed reaction is 3'-dephospho-CoA + GTP = GDP + CoA + H(+). The protein operates within cofactor biosynthesis; coenzyme A biosynthesis. In terms of biological role, catalyzes the GTP-dependent phosphorylation of the 3'-hydroxyl group of dephosphocoenzyme A to form coenzyme A (CoA). This Methanopyrus kandleri (strain AV19 / DSM 6324 / JCM 9639 / NBRC 100938) protein is GTP-dependent dephospho-CoA kinase.